Here is a 142-residue protein sequence, read N- to C-terminus: Large ribosomal subunit protein uL11 (142 aa).

It belongs to the universal ribosomal protein uL11 family. As to quaternary structure, part of the ribosomal stalk of the 50S ribosomal subunit. Interacts with L10 and the large rRNA to form the base of the stalk. L10 forms an elongated spine to which L12 dimers bind in a sequential fashion forming a multimeric L10(L12)X complex. One or more lysine residues are methylated.

In terms of biological role, forms part of the ribosomal stalk which helps the ribosome interact with GTP-bound translation factors. The sequence is that of Large ribosomal subunit protein uL11 from Shewanella sp. (strain W3-18-1).